Consider the following 385-residue polypeptide: Leucine aminopeptidase 1 (385 aa).

Positions 1-20 are cleaved as a signal peptide; that stretch reads MKLPSLLSLGVAASTTIVAA. Positions 21 to 87 are excised as a propeptide; it reads VPDQKPIGDT…FPKTFAQTTV (67 aa). Asparagine 177 carries an N-linked (GlcNAc...) asparagine glycan. The Zn(2+) site is built by histidine 185, aspartate 204, glutamate 243, and aspartate 270. Cysteine 319 and cysteine 323 form a disulfide bridge. Histidine 352 contacts Zn(2+).

Belongs to the peptidase M28 family. M28E subfamily. Monomer. Zn(2+) serves as cofactor.

The protein resides in the secreted. In terms of biological role, extracellular aminopeptidase that allows assimilation of proteinaceous substrates. The chain is Leucine aminopeptidase 1 (LAP1) from Ajellomyces capsulatus (strain NAm1 / WU24) (Darling's disease fungus).